Consider the following 368-residue polypeptide: Polynucleotide 5'-hydroxyl-kinase NOL9 (368 aa).

Residue 36–43 (GPKNSGKS) coordinates ATP.

It belongs to the Clp1 family. NOL9/GRC3 subfamily.

It localises to the nucleus. The protein localises to the nucleolus. Polynucleotide 5'-kinase involved in rRNA processing. This chain is Polynucleotide 5'-hydroxyl-kinase NOL9, found in Arabidopsis thaliana (Mouse-ear cress).